The primary structure comprises 129 residues: MAKSVRSSKKKVKRVVTDAVAHIYSSFNNTIVTITDRQGNALSWATSGGSGFRGSRKSTPFAAQVAAERAADMALEYGVRNVDVLVKGPGSGRDSAVRALNVKNLKVTSITDVTPLPHNGCRPPKKRRV.

The protein belongs to the universal ribosomal protein uS11 family. As to quaternary structure, part of the 30S ribosomal subunit. Interacts with proteins S7 and S18. Binds to IF-3.

Its function is as follows. Located on the platform of the 30S subunit, it bridges several disparate RNA helices of the 16S rRNA. Forms part of the Shine-Dalgarno cleft in the 70S ribosome. In Francisella tularensis subsp. mediasiatica (strain FSC147), this protein is Small ribosomal subunit protein uS11.